The following is a 619-amino-acid chain: Dihydroxy-acid dehydratase (619 aa).

Mg(2+) is bound at residue D81. Position 122 (C122) interacts with [2Fe-2S] cluster. Mg(2+)-binding residues include D123 and K124. K124 carries the N6-carboxylysine modification. C195 contributes to the [2Fe-2S] cluster binding site. E494 is a Mg(2+) binding site. The active-site Proton acceptor is S520.

Belongs to the IlvD/Edd family. In terms of assembly, homodimer. It depends on [2Fe-2S] cluster as a cofactor. Requires Mg(2+) as cofactor.

The catalysed reaction is (2R)-2,3-dihydroxy-3-methylbutanoate = 3-methyl-2-oxobutanoate + H2O. It carries out the reaction (2R,3R)-2,3-dihydroxy-3-methylpentanoate = (S)-3-methyl-2-oxopentanoate + H2O. The protein operates within amino-acid biosynthesis; L-isoleucine biosynthesis; L-isoleucine from 2-oxobutanoate: step 3/4. It participates in amino-acid biosynthesis; L-valine biosynthesis; L-valine from pyruvate: step 3/4. Its function is as follows. Functions in the biosynthesis of branched-chain amino acids. Catalyzes the dehydration of (2R,3R)-2,3-dihydroxy-3-methylpentanoate (2,3-dihydroxy-3-methylvalerate) into 2-oxo-3-methylpentanoate (2-oxo-3-methylvalerate) and of (2R)-2,3-dihydroxy-3-methylbutanoate (2,3-dihydroxyisovalerate) into 2-oxo-3-methylbutanoate (2-oxoisovalerate), the penultimate precursor to L-isoleucine and L-valine, respectively. This chain is Dihydroxy-acid dehydratase, found in Shewanella putrefaciens (strain CN-32 / ATCC BAA-453).